Consider the following 160-residue polypeptide: Transcription elongation factor GreA (160 aa).

Residues 1–72 (MAEKTYVMTL…QIQILETKIR (72 aa)) are a coiled coil.

The protein belongs to the GreA/GreB family.

In terms of biological role, necessary for efficient RNA polymerase transcription elongation past template-encoded arresting sites. The arresting sites in DNA have the property of trapping a certain fraction of elongating RNA polymerases that pass through, resulting in locked ternary complexes. Cleavage of the nascent transcript by cleavage factors such as GreA or GreB allows the resumption of elongation from the new 3'terminus. GreA releases sequences of 2 to 3 nucleotides. The sequence is that of Transcription elongation factor GreA from Streptococcus thermophilus (strain ATCC BAA-491 / LMD-9).